The following is a 77-amino-acid chain: Exodeoxyribonuclease 7 small subunit (77 aa).

Belongs to the XseB family. Heterooligomer composed of large and small subunits.

The protein localises to the cytoplasm. It carries out the reaction Exonucleolytic cleavage in either 5'- to 3'- or 3'- to 5'-direction to yield nucleoside 5'-phosphates.. In terms of biological role, bidirectionally degrades single-stranded DNA into large acid-insoluble oligonucleotides, which are then degraded further into small acid-soluble oligonucleotides. This Trichlorobacter lovleyi (strain ATCC BAA-1151 / DSM 17278 / SZ) (Geobacter lovleyi) protein is Exodeoxyribonuclease 7 small subunit.